The chain runs to 227 residues: Ubiquitin domain-containing protein 1 (227 aa).

The segment at 1–35 (MGNCVGRQRRERPAAPGHPRKRAGRNEPLKKERLK) is disordered. The segment covering 24-35 (GRNEPLKKERLK) has biased composition (basic and acidic residues). One can recognise a Ubiquitin-like domain in the interval 149–224 (FPLKVRLSTG…IQVIINQPPP (76 aa)).

Interacts with UBTD1.

Its function is as follows. May be involved in the regulation of cellular senescence through a positive feedback loop with TP53. Is a TP53 downstream target gene that increases the stability of TP53 protein by promoting the ubiquitination and degradation of MDM2. The chain is Ubiquitin domain-containing protein 1 (UBTD1) from Homo sapiens (Human).